The chain runs to 242 residues: MSIWEYANPVKFMQTSGRLLPWVVAATVLTLLPGLVWGFFFTPVAAEFGATVKVIYVHVPAATLAINIWVMMLVASLIWLIRRHHVSALAAKAAAPIGMVMTLIALITGAFWGQPMWGTWWEWDPRLTSFLILFLFYLGYMALWEAIENPDTAADLTGVLCLVGSVFAVLSRYAAIFWNQGLHQGSTLSLDKEEHIADVYWQPLVLSIAGFGMLFVALLLLRTRTEIRARRLKALEQRERMA.

The next 6 membrane-spanning stretches (helical) occupy residues 21 to 41, 61 to 81, 93 to 113, 127 to 147, 158 to 178, and 201 to 221; these read PWVVAATVLTLLPGLVWGFFF, AATLAINIWVMMLVASLIWLI, AAAPIGMVMTLIALITGAFWG, LTSFLILFLFYLGYMALWEAI, GVLCLVGSVFAVLSRYAAIFW, and WQPLVLSIAGFGMLFVALLLL.

The protein belongs to the CcmC/CycZ/HelC family.

The protein resides in the cell inner membrane. Required for the export of heme to the periplasm for the biogenesis of c-type cytochromes. The protein is Heme exporter protein C (helC) of Rhodobacter capsulatus (strain ATCC BAA-309 / NBRC 16581 / SB1003).